The following is a 154-amino-acid chain: Iron-sulfur cluster assembly 2 homolog, mitochondrial (154 aa).

The N-terminal 8 residues, 1-8 (MAAAWGSS), are a transit peptide targeting the mitochondrion. The disordered stretch occupies residues 29–49 (SLGPQARREASSSSPEAGEGQ). A compositionally biased stretch (low complexity) spans 39-49 (SSSSPEAGEGQ). The Fe cation site is built by cysteine 79, cysteine 144, and cysteine 146.

The protein belongs to the HesB/IscA family. Heterotetramer; forms a dimer of dimers with IBA57. Interacts with [2Fe-2S]-ISCA2 forming the heterodimer [2Fe- 2S]-ISCA2-IBA57 complex; [2Fe-2S] cluster binding is absolutely required to promote the complex formation.

It localises to the mitochondrion. Functionally, involved in the maturation of mitochondrial 4Fe-4S proteins functioning late in the iron-sulfur cluster assembly pathway. May be involved in the binding of an intermediate of Fe/S cluster assembly. In Homo sapiens (Human), this protein is Iron-sulfur cluster assembly 2 homolog, mitochondrial (ISCA2).